Here is a 302-residue protein sequence, read N- to C-terminus: Oxygen-dependent coproporphyrinogen-III oxidase (302 aa).

A substrate-binding site is contributed by serine 94. A divalent metal cation contacts are provided by histidine 98 and histidine 108. Catalysis depends on histidine 108, which acts as the Proton donor. Position 110 to 112 (110 to 112 (NVR)) interacts with substrate. Residues histidine 147 and histidine 177 each contribute to the a divalent metal cation site. The important for dimerization stretch occupies residues 242-277 (YVEFNLVYDRGTLFGLQTGGRTESILMSMPPLVRWQ). 260-262 (GGR) contacts substrate.

This sequence belongs to the aerobic coproporphyrinogen-III oxidase family. Homodimer. A divalent metal cation is required as a cofactor.

It is found in the cytoplasm. The enzyme catalyses coproporphyrinogen III + O2 + 2 H(+) = protoporphyrinogen IX + 2 CO2 + 2 H2O. Its pathway is porphyrin-containing compound metabolism; protoporphyrin-IX biosynthesis; protoporphyrinogen-IX from coproporphyrinogen-III (O2 route): step 1/1. Functionally, involved in the heme biosynthesis. Catalyzes the aerobic oxidative decarboxylation of propionate groups of rings A and B of coproporphyrinogen-III to yield the vinyl groups in protoporphyrinogen-IX. The sequence is that of Oxygen-dependent coproporphyrinogen-III oxidase from Shewanella sp. (strain ANA-3).